A 237-amino-acid chain; its full sequence is Flagellar brake protein YcgR (237 aa).

The 118-residue stretch at 108–225 folds into the PilZ domain; sequence QRRRQFRVTT…MERKIQSAVF (118 aa).

The protein belongs to the YcgR family. In terms of assembly, monomer. Interacts with the flagellar basal bodies.

The protein resides in the bacterial flagellum basal body. Acts as a flagellar brake, regulating swimming and swarming in a bis-(3'-5') cyclic diguanylic acid (c-di-GMP)-dependent manner. Binds 1 c-di-GMP dimer per subunit. Increasing levels of c-di-GMP lead to decreased motility. This chain is Flagellar brake protein YcgR, found in Serratia proteamaculans (strain 568).